Here is a 290-residue protein sequence, read N- to C-terminus: ATP synthase subunit a (290 aa).

Helical transmembrane passes span 44–64 (AFHVDTLGWSVALGVIFILLF), 104–124 (VIAPLALTIFVWVFLMNAIDL), 161–181 (LSVFALIIFYSIKVKGIGGFI), 194–214 (ILVQALLIPVNFLLEFVTLVA), 233–253 (VFILIAVMFGSGLLWLSGMGV), and 260–280 (AVFHILIITLQAFIFMMLTIV).

It belongs to the ATPase A chain family. In terms of assembly, F-type ATPases have 2 components, CF(1) - the catalytic core - and CF(0) - the membrane proton channel. CF(1) has five subunits: alpha(3), beta(3), gamma(1), delta(1), epsilon(1). CF(0) has three main subunits: a(1), b(2) and c(9-12). The alpha and beta chains form an alternating ring which encloses part of the gamma chain. CF(1) is attached to CF(0) by a central stalk formed by the gamma and epsilon chains, while a peripheral stalk is formed by the delta and b chains.

Its subcellular location is the cell inner membrane. Functionally, key component of the proton channel; it plays a direct role in the translocation of protons across the membrane. The protein is ATP synthase subunit a of Pseudomonas fluorescens (strain ATCC BAA-477 / NRRL B-23932 / Pf-5).